Here is a 792-residue protein sequence, read N- to C-terminus: Phenylalanine--tRNA ligase beta subunit (792 aa).

Residues 39-147 (GESLGQVVVA…DDAPVGQALA (109 aa)) enclose the tRNA-binding domain. The B5 domain maps to 400 to 475 (PQPARILLRR…RIHGYDRVPT (76 aa)). The Mg(2+) site is built by D453, D459, E462, and D463. Positions 698-791 (SRFPSVRRDL…IEREHRARIR (94 aa)) constitute an FDX-ACB domain.

It belongs to the phenylalanyl-tRNA synthetase beta subunit family. Type 1 subfamily. As to quaternary structure, tetramer of two alpha and two beta subunits. The cofactor is Mg(2+).

It is found in the cytoplasm. The catalysed reaction is tRNA(Phe) + L-phenylalanine + ATP = L-phenylalanyl-tRNA(Phe) + AMP + diphosphate + H(+). The chain is Phenylalanine--tRNA ligase beta subunit from Xanthomonas oryzae pv. oryzae (strain MAFF 311018).